The primary structure comprises 693 residues: Polyribonucleotide nucleotidyltransferase (693 aa).

Aspartate 487 and aspartate 493 together coordinate Mg(2+). The KH domain occupies 554–613; it reads PRIYTIKINPEKIKDVIGKGGSIIRMLTEETGTVIEIKDDGIVKISAINGEKAKYAIKRI. An S1 motif domain is found at 623–691; sequence GKIYSGKVTR…RQGRIRLSMK (69 aa).

This sequence belongs to the polyribonucleotide nucleotidyltransferase family. Component of the RNA degradosome, which is a multiprotein complex involved in RNA processing and mRNA degradation. Mg(2+) is required as a cofactor.

The protein localises to the cytoplasm. It carries out the reaction RNA(n+1) + phosphate = RNA(n) + a ribonucleoside 5'-diphosphate. Functionally, involved in mRNA degradation. Catalyzes the phosphorolysis of single-stranded polyribonucleotides processively in the 3'- to 5'-direction. This Buchnera aphidicola subsp. Cinara cedri (strain Cc) protein is Polyribonucleotide nucleotidyltransferase.